The chain runs to 69 residues: Cytochrome c oxidase subunit 8A, mitochondrial (69 aa).

The N-terminal 25 residues, 1 to 25, are a transit peptide targeting the mitochondrion; it reads MYVVTPLLLRGLTGSARRLPVPRAQ. Positions 2–19 match the SIFI-degron motif; the sequence is YVVTPLLLRGLTGSARRL. Residues 26-36 are Mitochondrial matrix-facing; sequence VHSMPPEQKLG. Residues 37–60 form a helical membrane-spanning segment; sequence VLELAIGFTSCMVTFLLPAGWIMS. Residues 61 to 69 lie on the Mitochondrial intermembrane side of the membrane; it reads HLESYKKRG.

The protein belongs to the cytochrome c oxidase VIII family. In terms of assembly, component of the cytochrome c oxidase (complex IV, CIV), a multisubunit enzyme composed of 14 subunits. The complex is composed of a catalytic core of 3 subunits MT-CO1, MT-CO2 and MT-CO3, encoded in the mitochondrial DNA, and 11 supernumerary subunits COX4I, COX5A, COX5B, COX6A, COX6B, COX6C, COX7A, COX7B, COX7C, COX8 and NDUFA4, which are encoded in the nuclear genome. The complex exists as a monomer or a dimer and forms supercomplexes (SCs) in the inner mitochondrial membrane with NADH-ubiquinone oxidoreductase (complex I, CI) and ubiquinol-cytochrome c oxidoreductase (cytochrome b-c1 complex, complex III, CIII), resulting in different assemblies (supercomplex SCI(1)III(2)IV(1) and megacomplex MCI(2)III(2)IV(2)). Post-translationally, in response to mitochondrial stress, the precursor protein is ubiquitinated by the SIFI complex in the cytoplasm before mitochondrial import, leading to its degradation. Within the SIFI complex, UBR4 initiates ubiquitin chain that are further elongated or branched by KCMF1.

The protein resides in the mitochondrion inner membrane. The protein operates within energy metabolism; oxidative phosphorylation. Component of the cytochrome c oxidase, the last enzyme in the mitochondrial electron transport chain which drives oxidative phosphorylation. The respiratory chain contains 3 multisubunit complexes succinate dehydrogenase (complex II, CII), ubiquinol-cytochrome c oxidoreductase (cytochrome b-c1 complex, complex III, CIII) and cytochrome c oxidase (complex IV, CIV), that cooperate to transfer electrons derived from NADH and succinate to molecular oxygen, creating an electrochemical gradient over the inner membrane that drives transmembrane transport and the ATP synthase. Cytochrome c oxidase is the component of the respiratory chain that catalyzes the reduction of oxygen to water. Electrons originating from reduced cytochrome c in the intermembrane space (IMS) are transferred via the dinuclear copper A center (CU(A)) of subunit 2 and heme A of subunit 1 to the active site in subunit 1, a binuclear center (BNC) formed by heme A3 and copper B (CU(B)). The BNC reduces molecular oxygen to 2 water molecules using 4 electrons from cytochrome c in the IMS and 4 protons from the mitochondrial matrix. This is Cytochrome c oxidase subunit 8A, mitochondrial (COX8A) from Ateles belzebuth (White-bellied spider monkey).